We begin with the raw amino-acid sequence, 334 residues long: Phospho-N-acetylmuramoyl-pentapeptide-transferase (334 aa).

The next 10 membrane-spanning stretches (helical) occupy residues 2–22, 55–75, 78–98, 116–136, 154–174, 187–207, 211–231, 236–256, 262–282, and 311–331; these read IPVL…GPVV, VIFL…PGGV, GWIE…LGFM, EKLL…VFVL, GLAL…VVLA, GLAA…ALVM, WVGI…CYNF, VFMG…AAVI, FLLI…IQVI, and VVLT…AGLK.

Belongs to the glycosyltransferase 4 family. MraY subfamily. Mg(2+) serves as cofactor.

It is found in the cell membrane. The catalysed reaction is UDP-N-acetyl-alpha-D-muramoyl-L-alanyl-gamma-D-glutamyl-meso-2,6-diaminopimeloyl-D-alanyl-D-alanine + di-trans,octa-cis-undecaprenyl phosphate = di-trans,octa-cis-undecaprenyl diphospho-N-acetyl-alpha-D-muramoyl-L-alanyl-D-glutamyl-meso-2,6-diaminopimeloyl-D-alanyl-D-alanine + UMP. It participates in cell wall biogenesis; peptidoglycan biosynthesis. Catalyzes the initial step of the lipid cycle reactions in the biosynthesis of the cell wall peptidoglycan: transfers peptidoglycan precursor phospho-MurNAc-pentapeptide from UDP-MurNAc-pentapeptide onto the lipid carrier undecaprenyl phosphate, yielding undecaprenyl-pyrophosphoryl-MurNAc-pentapeptide, known as lipid I. This Desulforudis audaxviator (strain MP104C) protein is Phospho-N-acetylmuramoyl-pentapeptide-transferase.